The primary structure comprises 320 residues: Zinc finger protein 330 (320 aa).

Positions 1-23 (MPKKKTGARKKAENRREREKQLR) are disordered. A Nuclear localization signal motif is present at residues 3–11 (KKKTGARKK). Over residues 10-22 (KKAENRREREKQL) the composition is skewed to basic and acidic residues. 4 consecutive C4-type zinc fingers follow at residues 42-58 (CDKC…CYFC), 67-104 (CAQC…CDFC), 129-149 (CVEC…CSFC), and 175-189 (CVSC…CLRC). 2 disordered regions span residues 206–250 (EKGK…ASGY) and 264–303 (GASY…TNLN). Over residues 216-225 (CGHETQETKD) the composition is skewed to basic and acidic residues. Acidic residues predominate over residues 269–287 (DEEEDEYEAEDDEEEEDEG). S291 carries the phosphoserine modification.

Belongs to the NOA36 family.

It localises to the nucleus. Its subcellular location is the nucleolus. It is found in the chromosome. The protein resides in the centromere. The chain is Zinc finger protein 330 (ZNF330) from Bos taurus (Bovine).